The sequence spans 150 residues: UPF0208 membrane protein VIBHAR_02941 (150 aa).

2 helical membrane passes run 42-62 and 70-90; these read FGIK…MAFN and AIVV…WLGS.

Belongs to the UPF0208 family.

It is found in the cell inner membrane. The protein is UPF0208 membrane protein VIBHAR_02941 of Vibrio campbellii (strain ATCC BAA-1116).